Here is a 604-residue protein sequence, read N- to C-terminus: Glucose-methanol-choline family oxidoreductase mfmG (604 aa).

The signal sequence occupies residues 1–24; it reads MYMLRPSSLLLATGLLNQGSSVLA. N32 carries an N-linked (GlcNAc...) asparagine glycan. FAD-binding positions include 44–45 and 65–66; these read TA and EA. N76 and N97 each carry an N-linked (GlcNAc...) asparagine glycan. 126–129 lines the FAD pocket; it reads NFMA. N-linked (GlcNAc...) asparagine glycans are attached at residues N260, N265, N401, and N460. Residue H538 is the Proton acceptor of the active site. Residues A572 and 584-585 contribute to the FAD site; that span reads PQ.

Belongs to the GMC oxidoreductase family. As to quaternary structure, homodimer. The cofactor is FAD.

Its function is as follows. Oxidoreductase; part of the gene cluster that mediates the biosynthesis of the phthalide-terpenoid hybrid 11'-O-desmethylfendlerol. MfmG seems not to be involved directly in the biosynthesis of 11'-O-desmethylfendlerol and its role has still to be determined. The biosynthesis of 11'-O-desmethylfendlerol begins with the NR-PKS mfmB that forms 3,5-dimethylorsellinic acid (DMOA), which is then transformed into the phthalide 5,7-dihydroxy-4-(hydroxymethyl)-6-methylphthalide by the cytochrome P450 monooxygenase mfmA and the hydrolase mfmC. Subsequently, the methyltransferase mfmE catalyzes 7-O-methylation to yield 5-hydroxy-4-(hydroxymethyl)-7-methoxy-6-methylphthalide, which undergoes C-3 hydroxylation by the cytochrome P450 monooxygenase mfmF. The resultant cyclopolic acid (2,5-dihydroxy-4-(hydroxymethyl)-7-methoxy-6-methylphthalide) is then farnesylated by the DMATS-type prenyltransferase mfmD to afford 5-O-farnesylcyclopolic acid. Finally, the Pyr4-family terpene cyclase mfmH cyclizes the farnesyl moiety of 5-O-farnesylcyclopolic acid into a drimane-like structure, thus completing the biosynthesis of 11'-O-desmethylfendlerol. The protein is Glucose-methanol-choline family oxidoreductase mfmG of Annulohypoxylon moriforme (Filamentous fungus).